The following is a 62-amino-acid chain: Large ribosomal subunit protein uL30 (62 aa).

This sequence belongs to the universal ribosomal protein uL30 family. Part of the 50S ribosomal subunit.

This chain is Large ribosomal subunit protein uL30, found in Herpetosiphon aurantiacus (strain ATCC 23779 / DSM 785 / 114-95).